We begin with the raw amino-acid sequence, 761 residues long: Semaphorin-4A (761 aa).

Residues 1-32 form the signal peptide; sequence MALPALGLDPWSLLGLFLFQLLQLLLPTTTAG. Topologically, residues 33–683 are extracellular; the sequence is GGGQGPMPRV…LAAQQSYWPH (651 aa). The Sema domain occupies 36-494; that stretch reads QGPMPRVRYY…FSGGVWRVPR (459 aa). A disulfide bridge links C113 with C124. Residues N120 and N135 are each glycosylated (N-linked (GlcNAc...) asparagine). 3 disulfide bridges follow: C142–C151, C269–C379, and C293–C339. N-linked (GlcNAc...) asparagine glycosylation is present at N496. In terms of domain architecture, PSI spans 496-548; sequence NCSVYESCVDCVLARDPHCAWDPESRTCCLLSAPNLNSWKQDMERGNPEWACA. Intrachain disulfides connect C497/C514, C506/C523, and C580/C624. The Ig-like C2-type domain occupies 573–631; that stretch reads NSILELPCPHLSALASYYWSHGPAAVPEASSTVYNGSLLLIVQDGVGGLYQCWATENGF. Residue N607 is glycosylated (N-linked (GlcNAc...) asparagine). The helical transmembrane segment at 684-704 threads the bilayer; that stretch reads FVTVTVLFALVLSGALIILVA. The Cytoplasmic portion of the chain corresponds to 705–761; it reads SPLRALRARGKVQGCETLRPGEKAPLSREQHLQSPKECRTSASDVDADNNCLGTEVA. The segment at 722–749 is disordered; sequence LRPGEKAPLSREQHLQSPKECRTSASDV. The segment covering 723-743 has biased composition (basic and acidic residues); the sequence is RPGEKAPLSREQHLQSPKECR.

Belongs to the semaphorin family. Interacts with PLXNB1, PLXNB2, PLXNB3, PLXND1 and TIMD2.

The protein resides in the cell membrane. Cell surface receptor for PLXNB1, PLXNB2, PLXNB3 and PLXND1 that plays an important role in cell-cell signaling. Regulates glutamatergic and GABAergic synapse development. Promotes the development of inhibitory synapses in a PLXNB1-dependent manner and promotes the development of excitatory synapses in a PLXNB2-dependent manner. Plays a role in priming antigen-specific T-cells, promotes differentiation of Th1 T-helper cells, and thereby contributes to adaptive immunity. Promotes phosphorylation of TIMD2. Inhibits angiogenesis. Promotes axon growth cone collapse. Inhibits axonal extension by providing local signals to specify territories inaccessible for growing axons. This Homo sapiens (Human) protein is Semaphorin-4A (SEMA4A).